We begin with the raw amino-acid sequence, 795 residues long: Protocadherin beta-4 (795 aa).

Residues M1–L27 form the signal peptide. The Extracellular portion of the chain corresponds to E28–L689. 5 Cadherin domains span residues V34–F132, V137–F241, Y246–L346, L351–F450, and Y455–V560. N183 carries an N-linked (GlcNAc...) asparagine glycan. Residue N417 is glycosylated (N-linked (GlcNAc...) asparagine). N-linked (GlcNAc...) asparagine glycosylation occurs at N566. Positions G567–L670 constitute a Cadherin 6 domain. A helical membrane pass occupies residues V690–V710. Topologically, residues R711–S795 are cytoplasmic.

It is found in the cell membrane. Potential calcium-dependent cell-adhesion protein. May be involved in the establishment and maintenance of specific neuronal connections in the brain. In Pan troglodytes (Chimpanzee), this protein is Protocadherin beta-4 (PCDHB4).